Consider the following 246-residue polypeptide: Probable fimbrial chaperone YadV (246 aa).

The first 25 residues, 1 to 25, serve as a signal peptide directing secretion; sequence MFFNTKHTTALCFVTCMAFSSSSIA.

Belongs to the periplasmic pilus chaperone family.

The protein localises to the periplasm. Its function is as follows. Part of the yadCKLM-htrE-yadVN fimbrial operon. Could contribute to adhesion to various surfaces in specific environmental niches. The sequence is that of Probable fimbrial chaperone YadV (yadV) from Escherichia coli (strain K12).